A 354-amino-acid chain; its full sequence is Arginase-2, mitochondrial (354 aa).

The transit peptide at 1–22 (MFLRSSVSRLLHGQIPCALTRS) directs the protein to the mitochondrion. 4 residues coordinate Mn(2+): His120, Asp143, His145, and Asp147. Substrate contacts are provided by residues 145 to 149 (HADIN), 156 to 158 (SGN), and Glu202. Mn(2+) contacts are provided by Asp251 and Asp253. Positions 265 and 296 each coordinate substrate.

The protein belongs to the arginase family. Homotrimer. Mn(2+) is required as a cofactor.

It is found in the mitochondrion. It carries out the reaction L-arginine + H2O = urea + L-ornithine. It participates in nitrogen metabolism; urea cycle; L-ornithine and urea from L-arginine: step 1/1. May play a role in the regulation of extra-urea cycle arginine metabolism and also in down-regulation of nitric oxide synthesis. Extrahepatic arginase functions to regulate L-arginine bioavailability to nitric oxid synthase (NOS). Arginine metabolism is a critical regulator of innate and adaptive immune responses. Seems to be involved in negative regulation of the survival capacity of activated T cells. May suppress inflammation-related signaling in asthmatic airway epithelium. May play a role in promoting prenatal immune suppression. Regulates RPS6KB1 signaling, which promotes endothelial cell senescence and inflammation and implicates NOS3/eNOS dysfunction. Can inhibit endothelial autophagy independently of its enzymatic activity implicating mTORC2 signaling. Involved in vascular smooth muscle cell senescence and apoptosis independently of its enzymatic activity. This Rattus norvegicus (Rat) protein is Arginase-2, mitochondrial (Arg2).